A 231-amino-acid chain; its full sequence is uncharacterized protein (231 aa).

Residues 1–17 (MFGKILTTSLLIAMTFA) form the signal peptide. Residues 197–231 (KARKQQKNEGDDEETEDEQKIGSAIDGWVERQAKL) are disordered.

This is an uncharacterized protein from Caenorhabditis elegans.